The sequence spans 341 residues: tRNA N6-adenosine threonylcarbamoyltransferase (341 aa).

Fe cation contacts are provided by H114 and H118. Substrate is bound by residues 136-140 (LVSGG), D170, G183, D187, and N275. D303 provides a ligand contact to Fe cation.

It belongs to the KAE1 / TsaD family. Fe(2+) is required as a cofactor.

It is found in the cytoplasm. It carries out the reaction L-threonylcarbamoyladenylate + adenosine(37) in tRNA = N(6)-L-threonylcarbamoyladenosine(37) in tRNA + AMP + H(+). Functionally, required for the formation of a threonylcarbamoyl group on adenosine at position 37 (t(6)A37) in tRNAs that read codons beginning with adenine. Is involved in the transfer of the threonylcarbamoyl moiety of threonylcarbamoyl-AMP (TC-AMP) to the N6 group of A37, together with TsaE and TsaB. TsaD likely plays a direct catalytic role in this reaction. The sequence is that of tRNA N6-adenosine threonylcarbamoyltransferase from Mycobacterium avium (strain 104).